The following is a 729-amino-acid chain: 1,4-alpha-glucan branching enzyme GlgB (729 aa).

Asp-405 (nucleophile) is an active-site residue. Glu-458 acts as the Proton donor in catalysis.

This sequence belongs to the glycosyl hydrolase 13 family. GlgB subfamily. As to quaternary structure, monomer.

The catalysed reaction is Transfers a segment of a (1-&gt;4)-alpha-D-glucan chain to a primary hydroxy group in a similar glucan chain.. It functions in the pathway glycan biosynthesis; glycogen biosynthesis. Its function is as follows. Catalyzes the formation of the alpha-1,6-glucosidic linkages in glycogen by scission of a 1,4-alpha-linked oligosaccharide from growing alpha-1,4-glucan chains and the subsequent attachment of the oligosaccharide to the alpha-1,6 position. This is 1,4-alpha-glucan branching enzyme GlgB from Mannheimia succiniciproducens (strain KCTC 0769BP / MBEL55E).